An 88-amino-acid chain; its full sequence is DNA-directed RNA polymerase subunit omega (88 aa).

This sequence belongs to the RNA polymerase subunit omega family. As to quaternary structure, the RNAP catalytic core consists of 2 alpha, 1 beta, 1 beta' and 1 omega subunit. When a sigma factor is associated with the core the holoenzyme is formed, which can initiate transcription.

The catalysed reaction is RNA(n) + a ribonucleoside 5'-triphosphate = RNA(n+1) + diphosphate. Its function is as follows. Promotes RNA polymerase assembly. Latches the N- and C-terminal regions of the beta' subunit thereby facilitating its interaction with the beta and alpha subunits. This chain is DNA-directed RNA polymerase subunit omega, found in Anaeromyxobacter sp. (strain Fw109-5).